A 181-amino-acid polypeptide reads, in one-letter code: Squamosa promoter-binding-like protein 5 (181 aa).

The span at 1-10 shows a compositional bias: basic residues; sequence MEGQRTQRRG. The segment at 1–58 is disordered; that stretch reads MEGQRTQRRGYLKDKATVSNLVEEEMENGMDGEEEDGGDEDKRKKVMERVRGPSTDRV. Over residues 22–39 the composition is skewed to acidic residues; sequence VEEEMENGMDGEEEDGGD. Residues 40 to 51 are compositionally biased toward basic and acidic residues; it reads EDKRKKVMERVR. Residues 60–137 form an SBP-type zinc finger; it reads SRLCQVDRCT…AGHNERRRKI (78 aa). The Zn(2+) site is built by C63, C68, C85, H88, C104, C107, H111, and C123. The Bipartite nuclear localization signal motif lies at 120 to 136; sequence KRSCRRRLAGHNERRRK. A disordered region spans residues 128-181; sequence AGHNERRRKISGDSFGEGSGRRGFSGQLIQTQERNRVDRKLPMTNSSFKRPQIR. The span at 170-181 shows a compositional bias: polar residues; the sequence is MTNSSFKRPQIR.

Zn(2+) serves as cofactor. As to expression, expressed in the inflorescence apical meristem and young flowers.

It localises to the nucleus. Its subcellular location is the cytoplasm. In terms of biological role, trans-acting factor that binds specifically to the consensus nucleotide sequence 5'-TNCGTACAA-3' of AP1 promoter. Promotes both vegetative phase change and flowering. The protein is Squamosa promoter-binding-like protein 5 (SPL5) of Arabidopsis thaliana (Mouse-ear cress).